The sequence spans 21 residues: Ocellatin-2 (21 aa).

An Isoleucine amide modification is found at Ile-21.

As to expression, expressed by the skin dorsal glands.

Its subcellular location is the secreted. Its function is as follows. Has hemolytic activity against human erythrocytes and antibacterial activity against the Gram-negative bacterium E.coli. The chain is Ocellatin-2 from Leptodactylus ocellatus (Argus frog).